We begin with the raw amino-acid sequence, 747 residues long: MTSQYSNYSCPLNNIQVNVIGSSRTSDDHFLEQMLTKRKKTNISQDLHYLLLGLNPRELYQISFKLARIDEKKYKFNGNFNEGDYYPHKNSEIPMEDTEEIVHSDGYQTGARWMKTGVYFPKIGISKEQPDKERCLLLESLHAYFPVLVFTTSSGISLEVPVWSQKFVTTMTSSNRSVKRREKRKLEETAGPAAKKTPDIIETTPEDVVPEVYNAQYFYQMQNNTVISSESKFSSPLALQQDLTEDFGTFAQLDAHFNVSVQSCSSSSLSSPAALKHDSTVSSDSDFDDKNSEEFDAVFEYIDQQFSNHDQNPMDQQSKSIDLNQTTWAPQSINNPGYLSTASSPAALNQDSSASEKSSIVRDKKSDENCLDEFDRVFNELDQQFTPKEDQVQDLSNCTTWNQEPINNSIQSNQFINPELFYFIFHKCLIISWPSCLSCCRGSILPQHLRTPPLVPISQLLIISPLVLPPYHNFTTGSATVSPFASTPANMTIFNFTSDSSTTYSNSTTAQVFPDVANTPDLSYFNIAPAVDLSLFIDPFVQSGRDLSIERSIRNFTNTLKKAHRQKKTAILTFQSTEPMQLEFKYCTKMLLRTDKPVGNFSIQLSGPYLEHLLNLSHHLCRFSEYNLFVKAHFPRGSYGSLTSMTGPAVEIPETQENITIIWVKKDFPENVNKYPVAINSLITEAIASNGTNQVLLTSKYPSDCTIRFRKCGFMIEGVLVVKKKETVIIDRQILGELNRLKHDLLQ.

The segment at residues Gln33–Asp199 is a DNA-binding region (T-box). 2 disordered regions span residues Ser268 to Asp289 and Ser332 to Lys364. A compositionally biased stretch (polar residues) spans Ser332 to Ser358.

The protein resides in the nucleus. The polypeptide is Putative T-box protein 31 (tbx-31) (Caenorhabditis elegans).